The chain runs to 99 residues: Large ribosomal subunit protein bL27 (99 aa).

The propeptide occupies 1–9 (MLIMNLQLF).

It belongs to the bacterial ribosomal protein bL27 family. The N-terminus is cleaved by ribosomal processing cysteine protease Prp.

In Clostridium botulinum (strain Eklund 17B / Type B), this protein is Large ribosomal subunit protein bL27.